A 473-amino-acid chain; its full sequence is Ribulose bisphosphate carboxylase large chain 2 (473 aa).

Positions 116 and 166 each coordinate substrate. K168 functions as the Proton acceptor in the catalytic mechanism. K170 serves as a coordination point for substrate. Residues K194, D196, and E197 each contribute to the Mg(2+) site. K194 is subject to N6-carboxylysine. Residue H287 is the Proton acceptor of the active site. Substrate-binding residues include R288, H320, and S372.

Belongs to the RuBisCO large chain family. Type I subfamily. As to quaternary structure, heterohexadecamer of 8 large chains and 8 small chains. Requires Mg(2+) as cofactor.

The catalysed reaction is 2 (2R)-3-phosphoglycerate + 2 H(+) = D-ribulose 1,5-bisphosphate + CO2 + H2O. It catalyses the reaction D-ribulose 1,5-bisphosphate + O2 = 2-phosphoglycolate + (2R)-3-phosphoglycerate + 2 H(+). RuBisCO catalyzes two reactions: the carboxylation of D-ribulose 1,5-bisphosphate, the primary event in carbon dioxide fixation, as well as the oxidative fragmentation of the pentose substrate. Both reactions occur simultaneously and in competition at the same active site. The chain is Ribulose bisphosphate carboxylase large chain 2 from Cereibacter sphaeroides (strain ATCC 17025 / ATH 2.4.3) (Rhodobacter sphaeroides).